A 398-amino-acid polypeptide reads, in one-letter code: Enoyl-[acyl-carrier-protein] reductase [NADH] (398 aa).

NAD(+) is bound by residues 48–53, 74–75, 111–112, and 139–140; these read GASTGY, FE, DA, and LA. Substrate is bound at residue Tyr225. Residue Tyr235 is the Proton donor of the active site. NAD(+) is bound by residues Lys244 and 273–275; that span reads VVT.

Belongs to the TER reductase family. Monomer.

The catalysed reaction is a 2,3-saturated acyl-[ACP] + NAD(+) = a (2E)-enoyl-[ACP] + NADH + H(+). Its pathway is lipid metabolism; fatty acid biosynthesis. Involved in the final reduction of the elongation cycle of fatty acid synthesis (FAS II). Catalyzes the reduction of a carbon-carbon double bond in an enoyl moiety that is covalently linked to an acyl carrier protein (ACP). In Paraburkholderia xenovorans (strain LB400), this protein is Enoyl-[acyl-carrier-protein] reductase [NADH].